The following is a 142-amino-acid chain: Large ribosomal subunit protein mL42 (142 aa).

A mitochondrion-targeting transit peptide spans 1–32; sequence MALAAVKWAISSRTMLKHLFPVENGALYCVGH.

The protein belongs to the mitochondrion-specific ribosomal protein mL42 family. As to quaternary structure, component of the mitochondrial ribosome large subunit (39S) which comprises a 16S rRNA and about 50 distinct proteins. Component of the mitochondrial ribosome small subunit (28S) which comprises a 12S rRNA and about 30 distinct proteins.

It is found in the mitochondrion. The chain is Large ribosomal subunit protein mL42 (MRPL42) from Bos taurus (Bovine).